The chain runs to 449 residues: Tubulin alpha chain (449 aa).

The MREC motif signature appears at 1–4 (MREC). Glutamine 11 is a binding site for GTP. Lysine 40 is subject to N6-acetyllysine. 7 residues coordinate GTP: glutamate 71, serine 140, glycine 144, threonine 145, threonine 179, asparagine 206, and asparagine 228. Glutamate 71 is a Mg(2+) binding site. Residue glutamate 254 is part of the active site. The disordered stretch occupies residues 430–449 (KDYEEVGADSADAEDEGEEY). The span at 431-449 (DYEEVGADSADAEDEGEEY) shows a compositional bias: acidic residues.

The protein belongs to the tubulin family. In terms of assembly, dimer of alpha and beta chains. A typical microtubule is a hollow water-filled tube with an outer diameter of 25 nm and an inner diameter of 15 nM. Alpha-beta heterodimers associate head-to-tail to form protofilaments running lengthwise along the microtubule wall with the beta-tubulin subunit facing the microtubule plus end conferring a structural polarity. Microtubules usually have 13 protofilaments but different protofilament numbers can be found in some organisms and specialized cells. Requires Mg(2+) as cofactor. In terms of processing, some glutamate residues at the C-terminus are polyglycylated, resulting in polyglycine chains on the gamma-carboxyl group. Glycylation is mainly limited to tubulin incorporated into axonemes (cilia and flagella) whereas glutamylation is prevalent in neuronal cells, centrioles, axonemes, and the mitotic spindle. Both modifications can coexist on the same protein on adjacent residues, and lowering polyglycylation levels increases polyglutamylation, and reciprocally. The precise function of polyglycylation is still unclear. Some glutamate residues at the C-terminus are polyglutamylated, resulting in polyglutamate chains on the gamma-carboxyl group. Polyglutamylation plays a key role in microtubule severing by spastin (SPAST). SPAST preferentially recognizes and acts on microtubules decorated with short polyglutamate tails: severing activity by SPAST increases as the number of glutamates per tubulin rises from one to eight, but decreases beyond this glutamylation threshold. Post-translationally, acetylation of alpha chains at Lys-40 is located inside the microtubule lumen. This modification has been correlated with increased microtubule stability, intracellular transport and ciliary assembly. In terms of processing, undergoes a tyrosination/detyrosination cycle, the cyclic removal and re-addition of a C-terminal tyrosine residue by the enzymes tubulin tyrosine carboxypeptidase (MATCAP1, VASH1 or VASH2) and tubulin tyrosine ligase (TTL), respectively. Tyrosination promotes microtubule interaction with CAP-Gly microtubule plus-end tracking proteins. Tyrosinated tubulins regulate the initiation of dynein-driven motility. Post-translationally, detyrosination is involved in metaphase plate congression by guiding chromosomes during mitosis. Detyrosination increases microtubules-dependent mechanotransduction in dystrophic cardiac and skeletal muscle. In cardiomyocytes, detyrosinated microtubules are required to resist to contractile compression during contraction.

Its subcellular location is the cytoplasm. It localises to the cytoskeleton. The enzyme catalyses GTP + H2O = GDP + phosphate + H(+). Its function is as follows. Tubulin is the major constituent of microtubules, a cylinder consisting of laterally associated linear protofilaments composed of alpha- and beta-tubulin heterodimers. Microtubules grow by the addition of GTP-tubulin dimers to the microtubule end, where a stabilizing cap forms. Below the cap, tubulin dimers are in GDP-bound state, owing to GTPase activity of alpha-tubulin. This Xenopus laevis (African clawed frog) protein is Tubulin alpha chain (tuba).